Consider the following 102-residue polypeptide: Large ribosomal subunit protein bL21 (102 aa).

Positions 79-91 are enriched in basic residues; sequence RKDSKRKKGHRQP. Positions 79–102 are disordered; it reads RKDSKRKKGHRQPYTKLTIDKINA.

It belongs to the bacterial ribosomal protein bL21 family. Part of the 50S ribosomal subunit. Contacts protein L20.

This protein binds to 23S rRNA in the presence of protein L20. The chain is Large ribosomal subunit protein bL21 from Staphylococcus carnosus (strain TM300).